A 129-amino-acid chain; its full sequence is Follitropin subunit beta (129 aa).

An N-terminal signal peptide occupies residues 1–18 (MKSVQLCLLLWCWRAICC). 6 disulfide bridges follow: Cys21–Cys69, Cys35–Cys84, Cys38–Cys122, Cys46–Cys100, Cys50–Cys102, and Cys105–Cys112. N-linked (GlcNAc...) asparagine glycans are attached at residues Asn25 and Asn42.

It belongs to the glycoprotein hormones subunit beta family. As to quaternary structure, heterodimer. The active follitropin is a heterodimer composed of an alpha chain/CGA shared with other hormones and a unique beta chain/FSHB shown here.

Its subcellular location is the secreted. Together with the alpha chain CGA constitutes follitropin, the follicle-stimulating hormone, and provides its biological specificity to the hormone heterodimer. Binds FSHR, a G protein-coupled receptor, on target cells to activate downstream signaling pathways. Follitropin is involved in follicle development and spermatogenesis in reproductive organs. The chain is Follitropin subunit beta (FSHB) from Meriones unguiculatus (Mongolian jird).